Reading from the N-terminus, the 152-residue chain is Large ribosomal subunit protein bL9 (152 aa).

It belongs to the bacterial ribosomal protein bL9 family.

Binds to the 23S rRNA. In Mycobacterium marinum (strain ATCC BAA-535 / M), this protein is Large ribosomal subunit protein bL9.